We begin with the raw amino-acid sequence, 518 residues long: Alpha-ionylideneethane synthase abl3 (518 aa).

Disordered stretches follow at residues 294-355 and 440-466; these read AAPG…SVFE and KAPP…QRSK. Positions 299-339 are enriched in low complexity; that stretch reads TSSDNSSDNRSSSISSTSSTGTDGSGAGDASSVHSSGVHSD.

It belongs to the alpha-ionylideneethane synthase family.

It participates in hormone biosynthesis. Alpha-ionylideneethane synthase involved in the biosynthesis of abscisic acid (ABA), a phytohormone that acts antagonistically toward salicylic acid (SA), jasmonic acid (JA) and ethylene (ETH) signaling, to impede plant defense responses. During pathogen-host interaction, ABA plays a dual role in disease severity by increasing plant susceptibility and accelerating pathogenesis in the fungus itself. The first step of the pathway catalyzes the reaction from farnesyl diphosphate to alpha-ionylideneethane performed by the alpha-ionylideneethane synthase ABA3 via a three-step reaction mechanism involving 2 neutral intermediates, beta-farnesene and allofarnesene. The cytochrome P450 monooxygenase ABA1 might then be involved in the conversion of alpha-ionylideneethane to alpha-ionylideneacetic acid. Alpha-ionylideneacetic acid is further converted to abscisic acid in 2 steps involving the cytochrome P450 monooxygenase ABA2 and the short-chain dehydrogenase/reductase ABA4, via the intermediates 1'-deoxy-ABA or 1',4'-trans-diol-ABA, depending on the order of action of these 2 enzymes. ABA2 is responsible for the hydroxylation of carbon atom C-1' and ABA4 might be involved in the oxidation of the C-4' carbon atom. This chain is Alpha-ionylideneethane synthase abl3, found in Pyricularia oryzae (strain Y34) (Rice blast fungus).